The primary structure comprises 410 residues: Dipeptidase 1 (410 aa).

Positions 1–16 are cleaved as a signal peptide; that stretch reads MVIIWWFWSLLAICAS. 2 residues coordinate Zn(2+): H36 and D38. The cysteines at positions 87 and 170 are disulfide-linked. N-linked (GlcNAc...) asparagine glycosylation is present at N121. Zn(2+) is bound at residue E141. Residue H168 coordinates substrate. Residues H214 and H235 each contribute to the Zn(2+) site. A disulfide bond links C242 and C274. Substrate is bound at residue R246. A glycan (N-linked (GlcNAc...) asparagine) is linked at N258. Residue D304 coordinates substrate. A glycan (N-linked (GlcNAc...) asparagine) is linked at N332. S384 is lipidated: GPI-anchor amidated serine. Residues 385–410 constitute a propeptide, removed in mature form; sequence QAHSIHLQTGALVASLASLLFRLHLL.

The protein belongs to the metallo-dependent hydrolases superfamily. Peptidase M19 family. In terms of assembly, homodimer; disulfide-linked. The cofactor is Zn(2+). Expressed in heart, lung, skeletal muscle, kidney, liver, and testis. Not detected in brain and spleen.

It localises to the apical cell membrane. The protein localises to the cell projection. It is found in the microvillus membrane. It catalyses the reaction an L-aminoacyl-L-amino acid + H2O = 2 an L-alpha-amino acid. It carries out the reaction leukotriene D4 + H2O = leukotriene E4 + glycine. The catalysed reaction is L-cystine-bis-glycine + 2 H2O = L-cystine + 2 glycine. The enzyme catalyses a beta-lactam + H2O = a substituted beta-amino acid. It catalyses the reaction glycyldehydrophenylalanine + H2O = 2,3-didehydrophenylalanine + glycine. With respect to regulation, inhibited by L-penicillamine. Inhibited by cilastatin. Functionally, hydrolyzes a wide range of dipeptides including the conversion of leukotriene D4 to leukotriene E4. Hydrolyzes cystinyl-bis-glycine (cys-bis-gly) formed during glutathione degradation. Also possesses beta lactamase activity and hydrolytically inactivates beta-lactam antibiotics. Its function is as follows. Independently of its dipeptidase activity, acts as an adhesion receptor for neutrophil recruitment from bloodstream into inflamed lungs and liver. This Mus musculus (Mouse) protein is Dipeptidase 1 (Dpep1).